We begin with the raw amino-acid sequence, 95 residues long: Small ribosomal subunit protein bS21 (95 aa).

The tract at residues 56–95 is disordered; that stretch reads KLARKKMQREGLLPMKPKPVFGAGPGAGRGGPAAGPRGPR. A compositionally biased stretch (gly residues) spans 78 to 88; sequence AGPGAGRGGPA.

Belongs to the bacterial ribosomal protein bS21 family.

The protein is Small ribosomal subunit protein bS21 of Nitrobacter winogradskyi (strain ATCC 25391 / DSM 10237 / CIP 104748 / NCIMB 11846 / Nb-255).